A 239-amino-acid polypeptide reads, in one-letter code: Small ribosomal subunit protein uS3c (239 aa).

In terms of domain architecture, KH type-2 spans 43 to 139; it reads IKNYIQKNRK…RLNIGIEKVK (97 aa).

It belongs to the universal ribosomal protein uS3 family. In terms of assembly, part of the 30S ribosomal subunit.

The protein localises to the plastid. Its subcellular location is the chloroplast. This chain is Small ribosomal subunit protein uS3c (rps3), found in Oryza nivara (Indian wild rice).